We begin with the raw amino-acid sequence, 169 residues long: Large ribosomal subunit protein uL5 (169 aa).

Belongs to the universal ribosomal protein uL5 family. In terms of assembly, part of the 50S ribosomal subunit; contacts the 5S rRNA and probably tRNA. Forms a bridge to the 30S subunit in the 70S ribosome.

Its function is as follows. This is one of the proteins that bind and probably mediate the attachment of the 5S RNA into the large ribosomal subunit, where it forms part of the central protuberance. In the 70S ribosome it contacts protein S13 of the 30S subunit (bridge B1b), connecting the 2 subunits; this bridge is implicated in subunit movement. May contact the P site tRNA; the 5S rRNA and some of its associated proteins might help stabilize positioning of ribosome-bound tRNAs. This is Large ribosomal subunit protein uL5 from Methanococcoides burtonii (strain DSM 6242 / NBRC 107633 / OCM 468 / ACE-M).